A 492-amino-acid chain; its full sequence is Sestrin-1 (492 aa).

An N-terminal domain; may mediate the alkylhydroperoxide reductase activity region spans residues 71–252 (FADSFAALGR…ICDITNGNHS (182 aa)). Catalysis depends on Cys-130, which acts as the Cysteine sulfenic acid (-SOH) intermediate. 2 positions are modified to phosphoserine: Ser-293 and Ser-314. The segment at 321–492 (PARDVSRHFE…ALRAITRYMT (172 aa)) is C-terminal domain; mediates TORC1 regulation. L-leucine-binding positions include 386–389 (TYNT), Thr-398, and Glu-463.

It belongs to the sestrin family. Interacts with the GATOR2 complex which is composed of MIOS, SEC13, SEH1L, WDR24 and WDR59; the interaction is negatively regulated by leucine. Interacts with RRAGA, RRAGB, RRAGC and RRAGD; may function as a guanine nucleotide dissociation inhibitor for RRAGs and regulate them. Interacts with KEAP1, RBX1 and SQSTM1; in the SQSTM1-dependent autophagic degradation of KEAP1. May interact with PRDX1.

It is found in the nucleus. The protein localises to the cytoplasm. The catalysed reaction is a hydroperoxide + L-cysteinyl-[protein] = S-hydroxy-L-cysteinyl-[protein] + an alcohol. In terms of biological role, functions as an intracellular leucine sensor that negatively regulates the TORC1 signaling pathway through the GATOR complex. In absence of leucine, binds the GATOR subcomplex GATOR2 and prevents TORC1 signaling. Binding of leucine to SESN2 disrupts its interaction with GATOR2 thereby activating the TORC1 signaling pathway. This stress-inducible metabolic regulator may also play a role in protection against oxidative and genotoxic stresses. May positively regulate the transcription by NFE2L2 of genes involved in the response to oxidative stress by facilitating the SQSTM1-mediated autophagic degradation of KEAP1. Moreover, may prevent the accumulation of reactive oxygen species (ROS) through the alkylhydroperoxide reductase activity born by the N-terminal domain of the protein. Was originally reported to contribute to oxidative stress resistance by reducing PRDX1. However, this could not be confirmed. This Macaca fascicularis (Crab-eating macaque) protein is Sestrin-1.